Consider the following 92-residue polypeptide: Small ribosomal subunit protein uS19 (92 aa).

This sequence belongs to the universal ribosomal protein uS19 family.

In terms of biological role, protein S19 forms a complex with S13 that binds strongly to the 16S ribosomal RNA. The sequence is that of Small ribosomal subunit protein uS19 from Polaromonas naphthalenivorans (strain CJ2).